The primary structure comprises 1174 residues: Creatine kinase, flagellar (1174 aa).

Polar residues predominate over residues methionine 1–glycine 14. The segment at methionine 1–proline 62 is disordered. Low complexity predominate over residues alanine 18–glutamate 39. Positions proline 53–asparagine 139 constitute a Phosphagen kinase N-terminal 1 domain. Residues tyrosine 61–isoleucine 414 form a 1; approximate repeat. In terms of domain architecture, Phosphagen kinase C-terminal 1 spans tyrosine 166–leucine 408. ATP-binding positions include serine 169–arginine 173, histidine 232, arginine 277, and arginine 333–histidine 337. One can recognise a Phosphagen kinase N-terminal 2 domain in the interval arginine 426 to glycine 512. The stretch at tyrosine 434–isoleucine 787 is one 2; approximate repeat. Positions tyrosine 539–leucine 781 constitute a Phosphagen kinase C-terminal 2 domain. ATP-binding positions include serine 542–arginine 546, histidine 605, arginine 706, arginine 734–valine 739, and aspartate 749. The 87-residue stretch at proline 800–glycine 886 folds into the Phosphagen kinase N-terminal 3 domain. The stretch at tyrosine 808 to isoleucine 1161 is one 3; approximate repeat. A Phosphagen kinase C-terminal 3 domain is found at phenylalanine 913–leucine 1155.

This sequence belongs to the ATP:guanido phosphotransferase family. In terms of assembly, monomer.

Its subcellular location is the cytoplasm. The protein localises to the cytoskeleton. It is found in the flagellum axoneme. The catalysed reaction is creatine + ATP = N-phosphocreatine + ADP + H(+). Its function is as follows. This axonemal protein participates in an energy shuttle that utilizes phosphocreatine to transfer the energy from ATP generated by the mitochondrion in the sperm head to dynein in the distal portions of the flagellum. This Strongylocentrotus purpuratus (Purple sea urchin) protein is Creatine kinase, flagellar.